Consider the following 87-residue polypeptide: U3-theraphotoxin-Hhn1a 10 (87 aa).

Positions 1–24 (MVNMEASMFLTFAGLVLLFVVCYA) are cleaved as a signal peptide. Positions 25 to 52 (SESEEKEFPKEMLSSIFAVDNDFKQEER) are excised as a propeptide. 3 disulfides stabilise this stretch: cysteine 54–cysteine 67, cysteine 61–cysteine 72, and cysteine 66–cysteine 79.

It belongs to the neurotoxin 10 (Hwtx-1) family. 51 (Hntx-8) subfamily. Hntx-8 sub-subfamily. In terms of tissue distribution, expressed by the venom gland.

The protein localises to the secreted. In terms of biological role, ion channel inhibitor. This chain is U3-theraphotoxin-Hhn1a 10, found in Cyriopagopus hainanus (Chinese bird spider).